Consider the following 520-residue polypeptide: Peptide chain release factor 3 (520 aa).

One can recognise a tr-type G domain in the interval Glu8 to Thr277. Residues Ser17–Thr24, Asp85–His89, and Asn139–Asp142 contribute to the GTP site.

This sequence belongs to the TRAFAC class translation factor GTPase superfamily. Classic translation factor GTPase family. PrfC subfamily.

It is found in the cytoplasm. In terms of biological role, increases the formation of ribosomal termination complexes and stimulates activities of RF-1 and RF-2. It binds guanine nucleotides and has strong preference for UGA stop codons. It may interact directly with the ribosome. The stimulation of RF-1 and RF-2 is significantly reduced by GTP and GDP, but not by GMP. This chain is Peptide chain release factor 3, found in Staphylococcus aureus (strain USA300 / TCH1516).